The chain runs to 212 residues: Ribosomal RNA large subunit methyltransferase E (212 aa).

Positions 57, 59, 77, 93, and 122 each coordinate S-adenosyl-L-methionine. Lys162 acts as the Proton acceptor in catalysis.

The protein belongs to the class I-like SAM-binding methyltransferase superfamily. RNA methyltransferase RlmE family.

The protein resides in the cytoplasm. The catalysed reaction is uridine(2552) in 23S rRNA + S-adenosyl-L-methionine = 2'-O-methyluridine(2552) in 23S rRNA + S-adenosyl-L-homocysteine + H(+). In terms of biological role, specifically methylates the uridine in position 2552 of 23S rRNA at the 2'-O position of the ribose in the fully assembled 50S ribosomal subunit. The chain is Ribosomal RNA large subunit methyltransferase E from Coxiella burnetii (strain RSA 493 / Nine Mile phase I).